Reading from the N-terminus, the 307-residue chain is 1-aminocyclopropane-1-carboxylate oxidase 5 (307 aa).

Positions 106–134 (SNIKETMGEYREEVRKLASKMMEVMDENL) form a coiled coil. The region spanning 152–256 (GEETAFFGTK…RRSIASFYNP (105 aa)) is the Fe2OG dioxygenase domain. His-180, Asp-182, and His-237 together coordinate Fe cation. Arg-247 serves as a coordination point for 2-oxoglutarate.

Belongs to the iron/ascorbate-dependent oxidoreductase family. The cofactor is Fe(2+).

The catalysed reaction is 1-aminocyclopropane-1-carboxylate + L-ascorbate + O2 = ethene + L-dehydroascorbate + hydrogen cyanide + CO2 + 2 H2O. It functions in the pathway alkene biosynthesis; ethylene biosynthesis via S-adenosyl-L-methionine; ethylene from S-adenosyl-L-methionine: step 2/2. In terms of biological role, enzyme involved in the ethylene biosynthesis. The protein is 1-aminocyclopropane-1-carboxylate oxidase 5 of Arabidopsis thaliana (Mouse-ear cress).